Here is a 380-residue protein sequence, read N- to C-terminus: MAAQRDDEAGWSAEAARRVWGGAVPLQVHLHDADVTTLPPPPPFLTLGPRIGYLPLLVPIIKAHFSSTLPPGIDTVWFEYKGLPLKWYIPIGVLYDLLCADPERPWNLTVHFRGYPSEILTPCDGEDSVKWSYMNSLKEAAFIITGNSKNVMNMSQADQGALWQSVMKGNLDGYMNISTRLKLGPFEEDCLVRTSSVEGQQGSDEPESPGSGKPCRVPVRLYVRSVQEDLYDLEDALPVGDWESISYINRPFEVRREEGRSYITLEHALKTLLPEFFSSKASRIPDDSETAPQAPDSAPNDDSDVTPRSCEKLESSASSSPQEANVANKGKIVKLVRVQGIEVDMDIPFLWVANNLKNPECYLHICVYVGTRKREPKDGR.

Residue K138 forms a Glycyl lysine isopeptide (Lys-Gly) (interchain with G-Cter in ATG12) linkage. Residues 194 to 203 (TSSVEGQQGS) are compositionally biased toward polar residues. 2 disordered regions span residues 194 to 215 (TSSV…GKPC) and 283 to 309 (RIPD…TPRS).

This sequence belongs to the ATG5 family. As to quaternary structure, conjugated to ATG12. In terms of processing, conjugated to ATG12; which is essential for autophagy.

The protein localises to the cytoplasm. Its function is as follows. Required for autophagy. Conjugation to ATG12 is essential for plant nutrient recycling. In Oryza sativa subsp. indica (Rice), this protein is Autophagy protein 5 (ATG5).